The chain runs to 396 residues: MDDSKHILITKILKNEVTEALGCTEVGLIGYAVSLCNISDPFSIDKLELTLNNGSFKNAYAVGVPNTGKYGILPAVVGGLLGNSKNKLLIFNDITYSQELEDFIKEKLEIKVIDGPLFCNIKIKDNSGNYFESLIKDNHLNVVIPKIEKEKIDVEITTSEKGEYKNLELIDFLDYLDEIPEKIGKLVEKTVQTNKNLIKGDFLNYGTDILSIIVNKTTSACNTRMTGENMPAMSVAKSGNMGIMATLPIISYDSSTENNSEKLIKSVLLSMLVTIYSTYNSSYLSSMCGCVSKGGMGAVIGLCYYKNGKNLKKLDSSARTFTANLPGIICDGGKVGCALKLASGCFAAYSSLFVDISYENGIVGKDFKECVENISKISKAMGDLDCDIVEIMSKKM.

Cys23 serves as the catalytic Proton acceptor. Positions 288, 330, and 337 each coordinate [4Fe-4S] cluster.

The protein belongs to the L-cysteine desulfidase family. As to quaternary structure, homotrimer. [4Fe-4S] cluster serves as cofactor.

The enzyme catalyses L-cysteine + H2O = hydrogen sulfide + pyruvate + NH4(+) + H(+). Its function is as follows. Catalyzes the cleavage of L-cysteine to form 2-aminoprop-2-enoate and sulfide. The former then spontaneously hydrolyzes to pyruvate and NH(3). May be responsible for the production of sulfide required for the biosynthesis of iron-sulfur centers in this archaea. In Methanococcus maripaludis (strain C6 / ATCC BAA-1332), this protein is L-cysteine desulfidase.